The following is a 213-amino-acid chain: High frequency lysogenization protein HflD homolog (213 aa).

A coiled-coil region spans residues 79–126 (QGLNAELTRYTLSLMVLERKLSSAKGALDTLGNRINGLQRQLEHFDLQ).

Belongs to the HflD family.

The protein localises to the cytoplasm. Its subcellular location is the cell inner membrane. This Shigella dysenteriae serotype 1 (strain Sd197) protein is High frequency lysogenization protein HflD homolog.